Consider the following 550-residue polypeptide: Hydroxylamine reductase (550 aa).

[2Fe-2S] cluster-binding residues include Cys3, Cys6, Cys18, and Cys25. Hybrid [4Fe-2O-2S] cluster is bound by residues His249, Glu273, Cys317, Cys405, Cys433, Cys458, Glu492, and Lys494. Cys405 is subject to Cysteine persulfide.

This sequence belongs to the HCP family. It depends on [2Fe-2S] cluster as a cofactor. Hybrid [4Fe-2O-2S] cluster serves as cofactor.

It localises to the cytoplasm. It catalyses the reaction A + NH4(+) + H2O = hydroxylamine + AH2 + H(+). Its activity is regulated as follows. Inhibited by oxygen. Activated by cyanide except in the prolonged presence of excess cyanide, where the enzyme is inactivated. Functionally, catalyzes the reduction of hydroxylamine to form NH(3) and H(2)O. Is also able to reduce hydroxylamine analogs such as methylhydroxylamine and hydroxyquinone. Might have a role as a scavenger of potentially toxic by-products of nitrate metabolism. The chain is Hydroxylamine reductase from Escherichia coli (strain K12).